The following is a 378-amino-acid chain: Glutamate 5-kinase 1 (378 aa).

Lysine 13 contributes to the ATP binding site. The substrate site is built by serine 53, aspartate 140, and asparagine 152. 172-173 (SD) serves as a coordination point for ATP. The 78-residue stretch at 278 to 355 (AGRLTVDAGA…AEIETVLGYE (78 aa)) folds into the PUA domain.

This sequence belongs to the glutamate 5-kinase family.

It is found in the cytoplasm. The enzyme catalyses L-glutamate + ATP = L-glutamyl 5-phosphate + ADP. It functions in the pathway amino-acid biosynthesis; L-proline biosynthesis; L-glutamate 5-semialdehyde from L-glutamate: step 1/2. Functionally, catalyzes the transfer of a phosphate group to glutamate to form L-glutamate 5-phosphate. This chain is Glutamate 5-kinase 1, found in Mesorhizobium japonicum (strain LMG 29417 / CECT 9101 / MAFF 303099) (Mesorhizobium loti (strain MAFF 303099)).